The chain runs to 170 residues: Peptide deformylase-like (170 aa).

E139 is a catalytic residue.

The protein belongs to the polypeptide deformylase family.

This is Peptide deformylase-like from Bradyrhizobium diazoefficiens (strain JCM 10833 / BCRC 13528 / IAM 13628 / NBRC 14792 / USDA 110).